A 470-amino-acid chain; its full sequence is Glycine--tRNA ligase (470 aa).

The substrate site is built by R94 and E183. ATP contacts are provided by residues 215–217, 225–230, 298–299, and 342–345; these read RNE, FRMVEF, EI, and GCDR. Substrate is bound at residue 230 to 234; sequence FEQME. 338–342 lines the substrate pocket; it reads ETSSG.

Belongs to the class-II aminoacyl-tRNA synthetase family. In terms of assembly, homodimer.

The protein resides in the cytoplasm. The enzyme catalyses tRNA(Gly) + glycine + ATP = glycyl-tRNA(Gly) + AMP + diphosphate. In terms of biological role, catalyzes the attachment of glycine to tRNA(Gly). The sequence is that of Glycine--tRNA ligase from Chlorobaculum tepidum (strain ATCC 49652 / DSM 12025 / NBRC 103806 / TLS) (Chlorobium tepidum).